The primary structure comprises 1085 residues: Solute carrier family 12 member 4 (1085 aa).

The Cytoplasmic portion of the chain corresponds to 1-119 (MPHFTVVPVD…RRAAEAPSMG (119 aa)). Phosphoserine occurs at positions 24, 47, 51, 81, and 88. The discontinuously helical transmembrane segment at 120–141 (TLMGVYLPCLQNIFGVILFLRL) threads the bilayer. K(+)-binding residues include asparagine 131 and isoleucine 132. Residues 142-149 (TWMVGTAG) lie on the Extracellular side of the membrane. Residues 150–172 (VLQALLIVLICCCCTLLTAISMS) form a helical membrane-spanning segment. Over 173–196 (AIATNGVVPAGGSYFMISRSLGPE) the chain is Cytoplasmic. Residues 197-225 (FGGAVGLCFYLGTTFAAAMYILGAIEILL) traverse the membrane as a helical segment. Tyrosine 216 is a binding site for K(+). Topologically, residues 226-248 (TYIAPPAAIFYPSGAHDTSNATL) are extracellular. N-linked (GlcNAc...) asparagine glycosylation is present at asparagine 245. The next 2 helical transmembrane spans lie at 249–271 (NNMRVYGTIFLTFMTLVVFVGVK) and 272–297 (YVNKFASLFLACVIISILSIYAGGIK). Residues 298–419 (SIFDPPVFPV…LYVVADIATS (122 aa)) lie on the Extracellular side of the membrane. Cysteines 308 and 323 form a disulfide. N-linked (GlcNAc...) asparagine glycosylation is found at asparagine 312, asparagine 331, asparagine 347, and asparagine 361. Residues cysteine 343 and cysteine 353 are joined by a disulfide bond. The chain crosses the membrane as a helical span at residues 420 to 440 (FTVLVGIFFPSVTGIMAGSNR). K(+)-binding residues include proline 429 and threonine 432. Residues glycine 433, isoleucine 434, and methionine 435 each coordinate chloride. The Cytoplasmic segment spans residues 441–450 (SGDLRDAQKS). The chain crosses the membrane as a helical span at residues 451–473 (IPVGTILAIITTSLVYFSSVVLF). The Extracellular segment spans residues 474 to 504 (GACIEGVVLRDKYGDGVSRNLVVGTLAWPSP). The chain crosses the membrane as a helical span at residues 505-531 (WVIVIGSFFSTCGAGLQSLTGAPRLLQ). At 532–554 (AIAKDNIIPFLRVFGHGKVNGEP) the chain is on the cytoplasmic side. A run of 2 helical transmembrane segments spans residues 555–575 (TWALLLTALIAELGILIASLD) and 576–598 (MVAPILSMFFLMCYLFVNLACAV). A chloride-binding site is contributed by tyrosine 589. Residues 599-612 (QTLLRTPNWRPRFK) are Cytoplasmic-facing. Helical transmembrane passes span 613–635 (YYHWALSFLGMSLCLALMFVSSW) and 636–651 (YYALVAMLIAGMIYKY). Topologically, residues 652-1085 (IEYQGAEKEW…GGREVITIYS (434 aa)) are cytoplasmic. Positions 665–681 (IRGLSLSAARYALLRLE) are scissor helix. The ATP site is built by leucine 697, lysine 699, lysine 707, tyrosine 708, and valine 730. Serine 734 bears the Phosphoserine mark. ATP-binding residues include glycine 794, tryptophan 795, and tyrosine 797. Serine 916 and serine 967 each carry phosphoserine. Threonine 983 bears the Phosphothreonine mark. A Phosphoserine modification is found at serine 1050.

The protein belongs to the SLC12A transporter family. K/Cl co-transporter subfamily. Homodimer; adopts a domain-swap conformation at the scissor helices connecting the transmembrane domain and C-terminal domain. Heterodimer with other K-Cl cotransporters. In terms of processing, phosphorylated, phosphorylation may regulate transporter activity. As to expression, ubiquitous. Levels are much higher in erythrocytes from patients with Hb SC and Hb SS compared to normal AA erythrocytes. This may contribute to red blood cell dehydration and to the manifestation of sickle cell disease by increasing the intracellular concentration of HbS. In terms of tissue distribution, not detected in circulating reticulocytes.

Its subcellular location is the cell membrane. The catalysed reaction is K(+)(in) + chloride(in) = K(+)(out) + chloride(out). With respect to regulation, inhibited by WNK3. Its function is as follows. Mediates electroneutral potassium-chloride cotransport when activated by cell swelling. May contribute to cell volume homeostasis in single cells. May be involved in the regulation of basolateral Cl(-) exit in NaCl absorbing epithelia. Functionally, no transporter activity. The protein is Solute carrier family 12 member 4 of Homo sapiens (Human).